The primary structure comprises 124 residues: Ribulose bisphosphate carboxylase small subunit (124 aa).

It belongs to the RuBisCO small chain family. In terms of assembly, heterohexadecamer of 8 large and 8 small subunits.

RuBisCO catalyzes two reactions: the carboxylation of D-ribulose 1,5-bisphosphate, the primary event in carbon dioxide fixation, as well as the oxidative fragmentation of the pentose substrate. Both reactions occur simultaneously and in competition at the same active site. Although the small subunit is not catalytic it is essential for maximal activity. The chain is Ribulose bisphosphate carboxylase small subunit from Hydrogenophilus thermoluteolus (Pseudomonas hydrogenothermophila).